The following is a 172-amino-acid chain: MSSRPLAVLIGSPGAGKTTVGRALAERLGVDLLDTDAEIERRAGKTVSDIFVEDGEEAFRALEREVVAEALASHPGVVALGGGAILNEQTRADLAGHRVVYLEVEFADAAKRVGLDTARPLLLGNPRARLKALLRERLPIYQSLATLTVSTSEHTPEEAAELIAKELPAAGD.

Position 14–19 (14–19 (GAGKTT)) interacts with ATP. Thr18 serves as a coordination point for Mg(2+). Residues Asp36, Arg60, and Gly82 each coordinate substrate. An ATP-binding site is contributed by Arg119. Substrate is bound at residue Arg137.

This sequence belongs to the shikimate kinase family. Monomer. Mg(2+) is required as a cofactor.

Its subcellular location is the cytoplasm. It catalyses the reaction shikimate + ATP = 3-phosphoshikimate + ADP + H(+). Its pathway is metabolic intermediate biosynthesis; chorismate biosynthesis; chorismate from D-erythrose 4-phosphate and phosphoenolpyruvate: step 5/7. Functionally, catalyzes the specific phosphorylation of the 3-hydroxyl group of shikimic acid using ATP as a cosubstrate. In Thermobifida fusca (strain YX), this protein is Shikimate kinase.